We begin with the raw amino-acid sequence, 160 residues long: Cyclic pyranopterin monophosphate synthase (160 aa).

Residues 77–79 and 114–115 each bind substrate; these read MCH and ME. Asp129 is a catalytic residue.

Belongs to the MoaC family. Homohexamer; trimer of dimers.

It carries out the reaction (8S)-3',8-cyclo-7,8-dihydroguanosine 5'-triphosphate = cyclic pyranopterin phosphate + diphosphate. Its pathway is cofactor biosynthesis; molybdopterin biosynthesis. Catalyzes the conversion of (8S)-3',8-cyclo-7,8-dihydroguanosine 5'-triphosphate to cyclic pyranopterin monophosphate (cPMP). The chain is Cyclic pyranopterin monophosphate synthase from Listeria monocytogenes serotype 4b (strain F2365).